The sequence spans 380 residues: Two-component response regulator ORR28 (380 aa).

The 118-residue stretch at 13–130 folds into the Response regulatory domain; it reads SAMVIDEDKC…TIQNLWQHLD (118 aa). Position 65 is a 4-aspartylphosphate (Asp65). Positions 169–223 form a DNA-binding region, myb-like GARP; that stretch reads RKYYLMWTPHLQKKFLHALEILGEGQISLMIMDVDNIDRKQISTHLQKHRLQLKK. The segment at 225 to 245 is disordered; it reads LSKASFTKGSNEDTSNPSAKN. Over residues 228–245 the composition is skewed to polar residues; that stretch reads ASFTKGSNEDTSNPSAKN.

This sequence belongs to the ARR family. Type-B subfamily. In terms of processing, two-component system major event consists of a His-to-Asp phosphorelay between a sensor histidine kinase (HK) and a response regulator (RR). In plants, the His-to-Asp phosphorelay involves an additional intermediate named Histidine-containing phosphotransfer protein (HPt). This multistep phosphorelay consists of a His-Asp-His-Asp sequential transfer of a phosphate group between first a His and an Asp of the HK protein, followed by the transfer to a conserved His of the HPt protein and finally the transfer to an Asp in the receiver domain of the RR protein.

The protein resides in the nucleus. In terms of biological role, transcriptional activator that binds specific DNA sequence. Functions as a response regulator involved in His-to-Asp phosphorelay signal transduction system. Phosphorylation of the Asp residue in the receiver domain activates the ability of the protein to promote the transcription of target genes. May directly activate some type-A response regulators in response to cytokinins. The polypeptide is Two-component response regulator ORR28 (Oryza sativa subsp. indica (Rice)).